Here is a 1089-residue protein sequence, read N- to C-terminus: GPI ethanolamine phosphate transferase 3, catalytic subunit (1089 aa).

Residues 4-24 traverse the membrane as a helical segment; that stretch reads ASVLLFLAWVCFLFYAGIALF. The N-linked (GlcNAc...) asparagine glycan is linked to Asn268. 13 helical membrane-spanning segments follow: residues 457 to 477, 482 to 502, 510 to 530, 541 to 561, 575 to 595, 668 to 688, 701 to 721, 747 to 767, 830 to 850, 857 to 877, 944 to 964, 1014 to 1034, and 1048 to 1068; these read LLAA…SPGF, LLLT…GLLG, LVLL…WKAW, TLFP…AVFF, FLLG…GQLL, LWYG…RLWL, MLFV…YWAL, VAGL…TVLV, SVYS…LLLL, LVFL…AAGI, FASH…PFLC, LKYL…ASIL, and FIFE…GIAL.

Belongs to the PIGG/PIGN/PIGO family. PIGO subfamily. As to quaternary structure, part of the ethanolamine phosphate transferase 3 complex composed by PIGO and PIGF. PIGF is required to stabilize PIGO.

It localises to the endoplasmic reticulum membrane. It participates in glycolipid biosynthesis; glycosylphosphatidylinositol-anchor biosynthesis. Its function is as follows. Catalytic subunit of the ethanolamine phosphate transferase 3 complex that transfers an ethanolamine phosphate (EtNP) from a phosphatidylethanolamine (PE) to the 6-OH position of the third alpha-1,2-linked mannose of an alpha-D-Man-(1-&gt;2)-alpha-D-Man-(1-&gt;6)-2-PEtn-alpha-D-Man-(1-&gt;4)-alpha-D-GlcN-(1-&gt;6)-(1-radyl,2-acyl-sn-glycero-3-phospho)-2-acyl-inositol (also termed H6) intermediate to generate a 6-PEtn-alpha-D-Man-(1-&gt;2)-alpha-D-Man-(1-&gt;6)-2-PEtn-alpha-D-Man-(1-&gt;4)-alpha-D-GlcN-(1-&gt;6)-(1-radyl,2-acyl-sn-glycero-3-phospho)-2-acyl-inositol (also termed H7) and participates in the tenth step of the glycosylphosphatidylinositol-anchor biosynthesis. This Homo sapiens (Human) protein is GPI ethanolamine phosphate transferase 3, catalytic subunit.